We begin with the raw amino-acid sequence, 242 residues long: NAD-dependent protein deacetylase (242 aa).

One can recognise a Deacetylase sirtuin-type domain in the interval 1–242 (MQQFEEVHSI…EFVEGLSSRK (242 aa)). Residues alanine 23, threonine 27, phenylalanine 34, arginine 35, glutamine 102, isoleucine 104, aspartate 105, and histidine 120 each contribute to the NAD(+) site. Residue phenylalanine 34 coordinates nicotinamide. Nicotinamide contacts are provided by isoleucine 104 and aspartate 105. Histidine 120 (proton acceptor) is an active-site residue. Zn(2+)-binding residues include cysteine 128, cysteine 131, cysteine 148, and cysteine 151. NAD(+) contacts are provided by threonine 187, serine 188, asparagine 213, and isoleucine 231.

This sequence belongs to the sirtuin family. Class U subfamily. The cofactor is Zn(2+).

Its subcellular location is the cytoplasm. The enzyme catalyses N(6)-acetyl-L-lysyl-[protein] + NAD(+) + H2O = 2''-O-acetyl-ADP-D-ribose + nicotinamide + L-lysyl-[protein]. In terms of biological role, NAD-dependent protein deacetylase which modulates the activities of several enzymes which are inactive in their acetylated form. The sequence is that of NAD-dependent protein deacetylase from Bacillus cereus (strain ATCC 10987 / NRS 248).